The following is a 113-amino-acid chain: Large ribosomal subunit protein uL22 (113 aa).

It belongs to the universal ribosomal protein uL22 family. Part of the 50S ribosomal subunit.

In terms of biological role, this protein binds specifically to 23S rRNA; its binding is stimulated by other ribosomal proteins, e.g. L4, L17, and L20. It is important during the early stages of 50S assembly. It makes multiple contacts with different domains of the 23S rRNA in the assembled 50S subunit and ribosome. The globular domain of the protein is located near the polypeptide exit tunnel on the outside of the subunit, while an extended beta-hairpin is found that lines the wall of the exit tunnel in the center of the 70S ribosome. The polypeptide is Large ribosomal subunit protein uL22 (Opitutus terrae (strain DSM 11246 / JCM 15787 / PB90-1)).